Here is a 127-residue protein sequence, read N- to C-terminus: Glycine cleavage system H protein (127 aa).

Positions 23-104 (TALVGLTDYA…PYEAWFAKIT (82 aa)) constitute a Lipoyl-binding domain. Lys64 is modified (N6-lipoyllysine).

It belongs to the GcvH family. As to quaternary structure, the glycine cleavage system is composed of four proteins: P, T, L and H. Requires (R)-lipoate as cofactor.

Its function is as follows. The glycine cleavage system catalyzes the degradation of glycine. The H protein shuttles the methylamine group of glycine from the P protein to the T protein. The sequence is that of Glycine cleavage system H protein from Lachnoclostridium phytofermentans (strain ATCC 700394 / DSM 18823 / ISDg) (Clostridium phytofermentans).